We begin with the raw amino-acid sequence, 359 residues long: Type-1 angiotensin II receptor (359 aa).

Over 1–25 (MILNSSTEDGIKRIQDDCPKAGRHS) the chain is Extracellular. Asn4 carries an N-linked (GlcNAc...) asparagine glycan. The angiotensin II site is built by Gln15 and Asp17. 2 disulfide bridges follow: Cys18–Cys274 and Cys101–Cys180. Residues 26-55 (YIFVMIPTLYSIIFVVGIFGNSLVVIVIYF) traverse the membrane as a helical segment. Topologically, residues 56–61 (YMKLKT) are cytoplasmic. A helical transmembrane segment spans residues 62 to 89 (VASVFLLNLALADICFLLTLPLWAVYTA). Over 90–98 (MEYRWPFGN) the chain is Extracellular. The chain crosses the membrane as a helical span at residues 99–125 (YLCKIASASVSFNLYASVFLLTCLSID). At 126–141 (RYLAIVHPMKSRLRRT) the chain is on the cytoplasmic side. Residues 142 to 165 (MLVAKVTCVIIWLMAGLASLPAVI) form a helical membrane-spanning segment. Residues 166–190 (HRNVFFIENTNITVCAFHYESQNST) are Extracellular-facing. Arg167 is an angiotensin II binding site. An N-linked (GlcNAc...) asparagine glycan is attached at Asn176. The angiotensin II site is built by Phe182, His183, and Tyr184. N-linked (GlcNAc...) asparagine glycosylation occurs at Asn188. The helical transmembrane segment at 191-216 (LPIGLGLTKNILGFMFPFLIILTSYT) threads the bilayer. Lys199 contacts angiotensin II. Residues 217 to 239 (LIWKALKKAYEIQKNKPRNDDIF) are Cytoplasmic-facing. Residues 240–268 (KIIMAIVLFFFFSWVPHQIFTFLDVLIQL) form a helical membrane-spanning segment. The Extracellular segment spans residues 269–278 (GIIHDCKISD). Residues 279 to 304 (IVDTAMPITICIAYFNNCLNPLFYGF) form a helical membrane-spanning segment. At 305–359 (LGKKFKKYFLQLLKYIPPKAKSHSTLSTKMSTLSYRPSDNVSSSAKKPVQCFEVE) the chain is on the cytoplasmic side. The segment covering 337-349 (LSYRPSDNVSSSA) has biased composition (polar residues). The segment at 337–359 (LSYRPSDNVSSSAKKPVQCFEVE) is disordered. Cys355 carries S-palmitoyl cysteine lipidation.

Belongs to the G-protein coupled receptor 1 family. As to quaternary structure, interacts with MAS1. Interacts with ARRB1. Interacts with FLNA (via filamin repeat 21); increases PKA-mediated phosphorylation of FLNA. C-terminal Ser or Thr residues may be phosphorylated. As to expression, expressed in liver, kidney, adrenal gland, heart and colon.

It is found in the cell membrane. Functionally, receptor for angiotensin II, a vasoconstricting peptide, which acts as a key regulator of blood pressure and sodium retention by the kidney. The activated receptor in turn couples to G-alpha proteins G(q) (GNAQ, GNA11, GNA14 or GNA15) and thus activates phospholipase C and increases the cytosolic Ca(2+) concentrations, which in turn triggers cellular responses such as stimulation of protein kinase C. The sequence is that of Type-1 angiotensin II receptor (AGTR1) from Cavia porcellus (Guinea pig).